A 902-amino-acid chain; its full sequence is MKRMLINATQQEELRVALVDGQRLYDLDIEHSGSEQKKSNIYKGKITRIEPSLEAAFVDYGEEKNGFLPLKEISKNYFPENHIETLGFNIKNVLQEGQEVIVQISKEERGTKGAALTTFISLAGSYLVLMPNSPKSGGISRRIEGNDRIALKELLTLLELPEEMSLIIRTAGAGKSIESLRWDLSLRLQHWKTIQIIAKSRTAPFLIHQESNIIVRAFRDYLRQDIGEILIDNPKILDLARKHITFLGRPDFVNKIKLYSGEVPLFSYFQIETQINSAFQRKVRLPSGGSIMVDSTEALTAIDINSSRSTSGTDIASTAFNTNLEAVDEISRQLRLRDLGGLIVIDFIDMSAISHQRAIENRLREIARDDRARIQIGQISRFGLLEMSRQRLSSSLGESSHHICPRCTGTGTIRDNESLSLSILRLIEEEALKENTYEVRAIVPVEIACYLLNEKRDAVHAIEKRQAGGKTIIVPSKKMKTPHYSVSRIRKSESKNYTRYGLSNIRQSKITSFLKKNLLKKKQKEILDVANFNFYDNCYNKIQEAQENILKKNNYNNILLKVLSNNRNFIFKMITWFKNSFFIKNMLITSDIFKKNTLKNTNNIFFKKKYSSLNKKNNNQKKRVILSKLFEANIENIPLKNKKLDTSSANYLYDNIERKKNITKKNDLIQKNIHENSYLKHVLMNRYNVINIINNNYIFYKIFNRTKIFKNQNTNNSFLKFSSVTSPIFIFSSVFSLELALGKVWIKYPIAILDETKKQKKLNRKQILHISSISETNTIVNKNNYSGIKKIKHETYSFKKYVKNNIQNQEVTQSQLIKRTKKRNVFILDKKNFLYKRTCNRKNKIHQSSAPITKISKQSDLNKKEKEFHYNLSMMKSSLRGKNSAGVHSATNFSNSPVSKLK.

Residues 39–119 form the S1 motif domain; the sequence is SNIYKGKITR…GTKGAALTTF (81 aa). Residues aspartate 303 and aspartate 346 each coordinate Mg(2+). Positions 404 and 407 each coordinate Zn(2+). Residues 404–407 are required for zinc-mediated homotetramerization and catalytic activity; sequence CPRC. The segment at 881-902 is disordered; that stretch reads GKNSAGVHSATNFSNSPVSKLK. Polar residues predominate over residues 889–902; it reads SATNFSNSPVSKLK.

It belongs to the RNase E/G family. RNase E subfamily. As to quaternary structure, component of the RNA degradosome, which is a multiprotein complex involved in RNA processing and mRNA degradation. Within the RNA degradosome, RNase E assembles into a homotetramer formed by a dimer of dimers. It depends on Zn(2+) as a cofactor. Mg(2+) serves as cofactor.

The protein localises to the cytoplasm. It localises to the cell inner membrane. The catalysed reaction is Endonucleolytic cleavage of single-stranded RNA in A- and U-rich regions.. In terms of biological role, endoribonuclease that plays a central role in RNA processing and decay. Required for the maturation of 5S and 16S rRNAs and the majority of tRNAs. Also involved in the degradation of most mRNAs. The chain is Ribonuclease E from Buchnera aphidicola subsp. Acyrthosiphon pisum (strain APS) (Acyrthosiphon pisum symbiotic bacterium).